The primary structure comprises 406 residues: Gustatory receptor for sugar taste 64b (406 aa).

At 1–47 the chain is on the cytoplasmic side; sequence MPQGETFHRAVSNVLFISQIYGLLPVSNVRALDVADIRFRWCSPRIL. Residues 48–68 traverse the membrane as a helical segment; sequence YSLLIGILNLSEFGAVINYVI. Topologically, residues 69-79 are extracellular; the sequence is KVTINFHTSST. The helical transmembrane segment at 80–100 threads the bilayer; sequence LSLYIVCLLEHLFFWRLAIQW. The Cytoplasmic segment spans residues 101 to 130; sequence PRIMRTWHGVEQLFLRVPYRFYGEYRIKRR. A helical transmembrane segment spans residues 131–151; that stretch reads IYIVFTIVMSSALVEHCLLLG. Over 152 to 183 the chain is Extracellular; the sequence is NSFHLSNMERTQCKINVTYFESIYKWERPHLY. A glycan (N-linked (GlcNAc...) asparagine) is linked at Asn-167. Residues 184-204 form a helical membrane-spanning segment; sequence MILPYHFWMLPILEWVNQTIA. Residues 205 to 265 are Cytoplasmic-facing; the sequence is YPRSFTDCFI…KRLVHLLDAA (61 aa). Residues 266–286 traverse the membrane as a helical segment; it reads IAPLVLLAFGNNMSFICFQLF. Topologically, residues 287 to 290 are extracellular; that stretch reads NSFK. A helical membrane pass occupies residues 291–311; sequence NIGVDFLVMLAFWYSLGFAVV. Residues 312–370 lie on the Cytoplasmic side of the membrane; that stretch reads RTLLTIFVASSINDYERKIVTALRDVPSRAWSIEVQRFSEQLGNDTTALSGSGFFYLTR. Residues 371-391 traverse the membrane as a helical segment; the sequence is SLVLAMGTTIITYELMISDVI. Residues 392 to 406 are Extracellular-facing; sequence NQGSIRQKTQYCREY.

It belongs to the insect chemoreceptor superfamily. Gustatory receptor (GR) family. Gr5a subfamily. In terms of tissue distribution, expressed in Gr5a-expressing sugar-sensing cells.

The protein resides in the cell membrane. One of the few identified sugar gustatory receptors identified so far and which promotes the starvation-induced increase of feeding motivation. This chain is Gustatory receptor for sugar taste 64b (Gr64b), found in Drosophila melanogaster (Fruit fly).